The following is a 289-amino-acid chain: Small ribosomal subunit protein uS2C (289 aa).

The protein belongs to the universal ribosomal protein uS2 family. Component of the small ribosomal subunit. Mature ribosomes consist of a small (40S) and a large (60S) subunit. The 40S subunit contains about 33 different proteins and 1 molecule of RNA (18S). The 60S subunit contains about 49 different proteins and 3 molecules of RNA (25S, 5.8S and 5S). Interacts with rps21.

The protein localises to the cytoplasm. In terms of biological role, required for the assembly and/or stability of the 40S ribosomal subunit. Required for the processing of the 20S rRNA-precursor to mature 18S rRNA in a late step of the maturation of 40S ribosomal subunits. The chain is Small ribosomal subunit protein uS2C (rps0c) from Schizosaccharomyces japonicus (strain yFS275 / FY16936) (Fission yeast).